Consider the following 345-residue polypeptide: OVARIAN TUMOR DOMAIN-containing deubiquitinating enzyme 9 (345 aa).

An OTU domain is found at 204–328 (LVENKIEGDG…EVHYNSIYPE (125 aa)). Residue Asp-212 is part of the active site. Residue Cys-215 is the Nucleophile of the active site. His-321 is a catalytic residue.

The protein belongs to the peptidase C85 family.

The enzyme catalyses Thiol-dependent hydrolysis of ester, thioester, amide, peptide and isopeptide bonds formed by the C-terminal Gly of ubiquitin (a 76-residue protein attached to proteins as an intracellular targeting signal).. In terms of biological role, hydrolase that can remove conjugated ubiquitin from proteins in vitro and may therefore play an important regulatory role at the level of protein turnover by preventing degradation. Cysteine protease with a preference for 'Lys-63' and 'Lys-48' -linked ubiquitin (UB) tetramers as substrates. Also cleaves RUB-GST fusion. The chain is OVARIAN TUMOR DOMAIN-containing deubiquitinating enzyme 9 from Arabidopsis thaliana (Mouse-ear cress).